A 66-amino-acid chain; its full sequence is Toxin Cll1 (66 aa).

The region spanning K1–S66 is the LCN-type CS-alpha/beta domain. Cystine bridges form between C12–C65, C16–C41, C25–C46, and C29–C48.

The protein belongs to the long (4 C-C) scorpion toxin superfamily. Sodium channel inhibitor family. Beta subfamily. Expressed by the venom gland.

It is found in the secreted. Functionally, beta toxin that binds site-4 of sodium channels (Nav) and reduces peak current (observed on Nav1.1/SCN1A, Nav1.2/SCN2A, Nav1.3/SCN3A, Nav1.4/SCN5A, Nav1.5/SCN4A, and Nav1.6/SCN8A (IC(50)=44.9 nM)), shifts the voltage of activation toward more negative potentials (observed on Nav1.6, Nav1.1 (weak), Nav1.2 (weak), and Nav1.7 (weak)), and induces resurgent currents at negative voltages following brief and strong depolarizations (observed on Nav1.6, Nav1.1 (weak), Nav1.2 (weak), and Nav1.4 (weak)). This toxin is only active on crustaceans. This is Toxin Cll1 from Centruroides limpidus (Mexican scorpion).